A 688-amino-acid polypeptide reads, in one-letter code: Homoaconitase, mitochondrial (688 aa).

The N-terminal 19 residues, 1 to 19 (MALLYLSTRSSLKKTGARC), are a transit peptide targeting the mitochondrion. Positions 346, 406, and 409 each coordinate [4Fe-4S] cluster.

Belongs to the aconitase/IPM isomerase family. Requires [4Fe-4S] cluster as cofactor.

It localises to the mitochondrion. The enzyme catalyses (2R,3S)-homoisocitrate = cis-homoaconitate + H2O. It participates in amino-acid biosynthesis; L-lysine biosynthesis via AAA pathway; L-alpha-aminoadipate from 2-oxoglutarate: step 3/5. Catalyzes the reversible hydration of cis-homoaconitate to (2R,3S)-homoisocitrate, a step in the alpha-aminoadipate pathway for lysine biosynthesis. The protein is Homoaconitase, mitochondrial (LYS4) of Debaryomyces hansenii (strain ATCC 36239 / CBS 767 / BCRC 21394 / JCM 1990 / NBRC 0083 / IGC 2968) (Yeast).